The following is a 42-amino-acid chain: Photosystem I reaction center subunit IX (42 aa).

Residues 7–27 (YLSTAPVLATLWFGFLAGLLI) form a helical membrane-spanning segment.

It belongs to the PsaJ family.

The protein localises to the plastid. It is found in the chloroplast thylakoid membrane. In terms of biological role, may help in the organization of the PsaE and PsaF subunits. This chain is Photosystem I reaction center subunit IX, found in Huperzia lucidula (Shining clubmoss).